A 225-amino-acid polypeptide reads, in one-letter code: 2-C-methyl-D-erythritol 4-phosphate cytidylyltransferase (225 aa).

The protein belongs to the IspD/TarI cytidylyltransferase family. IspD subfamily.

The catalysed reaction is 2-C-methyl-D-erythritol 4-phosphate + CTP + H(+) = 4-CDP-2-C-methyl-D-erythritol + diphosphate. The protein operates within isoprenoid biosynthesis; isopentenyl diphosphate biosynthesis via DXP pathway; isopentenyl diphosphate from 1-deoxy-D-xylulose 5-phosphate: step 2/6. Catalyzes the formation of 4-diphosphocytidyl-2-C-methyl-D-erythritol from CTP and 2-C-methyl-D-erythritol 4-phosphate (MEP). In Haemophilus influenzae (strain PittEE), this protein is 2-C-methyl-D-erythritol 4-phosphate cytidylyltransferase.